The sequence spans 51 residues: Large ribosomal subunit protein eL39z (51 aa).

The protein belongs to the eukaryotic ribosomal protein eL39 family.

The protein is Large ribosomal subunit protein eL39z (RPL39A) of Oryza sativa subsp. japonica (Rice).